Here is a 123-residue protein sequence, read N- to C-terminus: Large ribosomal subunit protein mL52 (123 aa).

Residues 1-23 constitute a mitochondrion transit peptide; the sequence is MAALGTVLFTGVRRLHCSVAAWA. A compositionally biased stretch (basic and acidic residues) spans 99-109; it reads QEEQRKQENAL. The interval 99–123 is disordered; it reads QEEQRKQENALKPKGASLKSPLPSQ.

This sequence belongs to the mitochondrion-specific ribosomal protein mL52 family. As to quaternary structure, component of the mitochondrial large ribosomal subunit (mt-LSU). Mature mammalian 55S mitochondrial ribosomes consist of a small (28S) and a large (39S) subunit. The 28S small subunit contains a 12S ribosomal RNA (12S mt-rRNA) and 30 different proteins. The 39S large subunit contains a 16S rRNA (16S mt-rRNA), a copy of mitochondrial valine transfer RNA (mt-tRNA(Val)), which plays an integral structural role, and 52 different proteins. mL52 connects the central protuberance to the body of the ribosome.

The protein localises to the mitochondrion. The sequence is that of Large ribosomal subunit protein mL52 (MRPL52) from Homo sapiens (Human).